The following is a 614-amino-acid chain: Putative binding protein BMEII0691 (614 aa).

A signal peptide spans 1-28 (MNRFIAFFRSVFLIGLVATAFGALPARA).

Belongs to the bacterial solute-binding protein 5 family.

The protein resides in the periplasm. The chain is Putative binding protein BMEII0691 from Brucella melitensis biotype 1 (strain ATCC 23456 / CCUG 17765 / NCTC 10094 / 16M).